The chain runs to 275 residues: Rhamnulose-1-phosphate aldolase (275 aa).

Residue Glu117 is part of the active site. Zn(2+) contacts are provided by His141, His143, and His212.

This sequence belongs to the aldolase class II family. RhaD subfamily. Homotetramer. Zn(2+) is required as a cofactor.

Its subcellular location is the cytoplasm. It catalyses the reaction L-rhamnulose 1-phosphate = (S)-lactaldehyde + dihydroxyacetone phosphate. It functions in the pathway carbohydrate degradation; L-rhamnose degradation; glycerone phosphate from L-rhamnose: step 3/3. Its function is as follows. Catalyzes the reversible cleavage of L-rhamnulose-1-phosphate to dihydroxyacetone phosphate (DHAP) and L-lactaldehyde. The protein is Rhamnulose-1-phosphate aldolase of Salmonella choleraesuis (strain SC-B67).